Reading from the N-terminus, the 512-residue chain is Histidine ammonia-lyase (512 aa).

A cross-link (5-imidazolinone (Ala-Gly)) is located at residues 142-144 (ASG). A 2,3-didehydroalanine (Ser) modification is found at Ser-143.

Belongs to the PAL/histidase family. Post-translationally, contains an active site 4-methylidene-imidazol-5-one (MIO), which is formed autocatalytically by cyclization and dehydration of residues Ala-Ser-Gly.

The protein resides in the cytoplasm. The enzyme catalyses L-histidine = trans-urocanate + NH4(+). The protein operates within amino-acid degradation; L-histidine degradation into L-glutamate; N-formimidoyl-L-glutamate from L-histidine: step 1/3. This Allorhizobium ampelinum (strain ATCC BAA-846 / DSM 112012 / S4) (Agrobacterium vitis (strain S4)) protein is Histidine ammonia-lyase.